A 105-amino-acid chain; its full sequence is MLMPKQERNKIHQYLFQEGVVVAKKDFNQAKHEEIDTKNLYVIKALQSLTSKGYVKTQFSWQYYYYTLTEEGVEYLREYLNLPEHIVPGTYIQERNPSQRPQRRY.

This sequence belongs to the eukaryotic ribosomal protein eS10 family. Component of the small ribosomal subunit (SSU). Mature yeast ribosomes consist of a small (40S) and a large (60S) subunit. The 40S small subunit contains 1 molecule of ribosomal RNA (18S rRNA) and 33 different proteins (encoded by 57 genes). The large 60S subunit contains 3 rRNA molecules (25S, 5.8S and 5S rRNA) and 46 different proteins (encoded by 81 genes). eS10 interacts with GCN1 (via middle region); this interaction is direct and promotes GCN2 kinase activity. Post-translationally, the N-terminus is not modified.

Its subcellular location is the cytoplasm. In terms of biological role, component of the ribosome, a large ribonucleoprotein complex responsible for the synthesis of proteins in the cell. The small ribosomal subunit (SSU) binds messenger RNAs (mRNAs) and translates the encoded message by selecting cognate aminoacyl-transfer RNA (tRNA) molecules. The large subunit (LSU) contains the ribosomal catalytic site termed the peptidyl transferase center (PTC), which catalyzes the formation of peptide bonds, thereby polymerizing the amino acids delivered by tRNAs into a polypeptide chain. The nascent polypeptides leave the ribosome through a tunnel in the LSU and interact with protein factors that function in enzymatic processing, targeting, and the membrane insertion of nascent chains at the exit of the ribosomal tunnel. eS10 plays a role as a positive regulator of the GCN2 kinase activity by stimulating GCN1-mediated GCN2 activation. The sequence is that of Small ribosomal subunit protein eS10B from Saccharomyces cerevisiae (strain ATCC 204508 / S288c) (Baker's yeast).